We begin with the raw amino-acid sequence, 363 residues long: S-adenosylmethionine decarboxylase proenzyme (363 aa).

Catalysis depends on residues glutamate 9 and glutamate 12. Serine 69 functions as the Schiff-base intermediate with substrate; via pyruvic acid in the catalytic mechanism. Serine 69 is modified (pyruvic acid (Ser); by autocatalysis). The Proton donor; for catalytic activity role is filled by cysteine 83. Residues serine 232 and histidine 245 each act as proton acceptor; for processing activity in the active site.

This sequence belongs to the eukaryotic AdoMetDC family. Requires pyruvate as cofactor. Post-translationally, is synthesized initially as an inactive proenzyme. Formation of the active enzyme involves a self-maturation process in which the active site pyruvoyl group is generated from an internal serine residue via an autocatalytic post-translational modification. Two non-identical subunits are generated from the proenzyme in this reaction, and the pyruvate is formed at the N-terminus of the alpha chain, which is derived from the carboxyl end of the proenzyme. The post-translation cleavage follows an unusual pathway, termed non-hydrolytic serinolysis, in which the side chain hydroxyl group of the serine supplies its oxygen atom to form the C-terminus of the beta chain, while the remainder of the serine residue undergoes an oxidative deamination to produce ammonia and the pyruvoyl group blocking the N-terminus of the alpha chain.

The catalysed reaction is S-adenosyl-L-methionine + H(+) = S-adenosyl 3-(methylsulfanyl)propylamine + CO2. It participates in amine and polyamine biosynthesis; S-adenosylmethioninamine biosynthesis; S-adenosylmethioninamine from S-adenosyl-L-methionine: step 1/1. This is S-adenosylmethionine decarboxylase proenzyme (SAMDC) from Spinacia oleracea (Spinach).